The chain runs to 322 residues: Eukaryotic translation initiation factor 3 subunit I (322 aa).

WD repeat units follow at residues 4–43 (GHER…RLGT), 46–85 (GHQG…VIAS), 141–180 (MVES…KVVD), 184–223 (DHTA…CLKT), and 281–322 (GHFG…NIFE).

It belongs to the eIF-3 subunit I family. As to quaternary structure, component of the eukaryotic translation initiation factor 3 (eIF-3) complex. The eIF-3 complex interacts with pix.

It is found in the cytoplasm. Its function is as follows. Component of the eukaryotic translation initiation factor 3 (eIF-3) complex, which is involved in protein synthesis of a specialized repertoire of mRNAs and, together with other initiation factors, stimulates binding of mRNA and methionyl-tRNAi to the 40S ribosome. The eIF-3 complex specifically targets and initiates translation of a subset of mRNAs involved in cell proliferation. This is Eukaryotic translation initiation factor 3 subunit I from Drosophila virilis (Fruit fly).